The sequence spans 467 residues: MSAIDAGARAPENLWRQEIRATLALAWPMVLTNLGQTAMTATDVMMMGRLGPDTLASGALGANLYFMPLIFGLGLMLATSPMIATELGRRRYSVRDLRRTVRQGLWLAILISIPIWIVLWHGEAILLAMGQEPALAHQAGIYLRWLEWAVLPFYGYIVLRSFISALERPGWALIIVFVAVACNALFNWVFMFGNLGFPAMGIAGSGLATSLSSTLMFAGMAAVVMLEKKFRRYRLFGRFWRSDWPRFNGLLRLGLPIAGILAFEVTIFNAAALLMGLIDADSLAAHAIAIQIASISFMVPLGLNQAVTVRVGLAHGAGNPEGVSRAGWTAFVIGVSFMALMGLVMVLWPHLLISAFIDLANPANARVIALAVSFLVFAALFQVFDGAQAVAAGMLRGLHDTKVPMIYAAIGYWGVGLPLGVLLAFHFGFHGVGIWIGLSSGLAVVAALLLTRWLRRDRIAPPLAFGH.

12 helical membrane passes run 23-42 (LALAWPMVLTNLGQTAMTAT), 62-84 (ANLYFMPLIFGLGLMLATSPMIA), 104-126 (GLWLAILISIPIWIVLWHGEAIL), 141-163 (IYLRWLEWAVLPFYGYIVLRSFI), 170-192 (GWALIIVFVAVACNALFNWVFMF), 202-224 (IAGSGLATSLSSTLMFAGMAAVV), 250-272 (LLRLGLPIAGILAFEVTIFNAAA), 287-309 (AIAIQIASISFMVPLGLNQAVTV), 330-352 (AFVIGVSFMALMGLVMVLWPHLL), 367-384 (VIALAVSFLVFAALFQVF), 405-427 (MIYAAIGYWGVGLPLGVLLAFHF), and 432-454 (VGIWIGLSSGLAVVAALLLTRWL).

It belongs to the multi antimicrobial extrusion (MATE) (TC 2.A.66.1) family.

It localises to the cell inner membrane. Functionally, multidrug efflux pump. The chain is Probable multidrug resistance protein NorM (norM) from Mesorhizobium japonicum (strain LMG 29417 / CECT 9101 / MAFF 303099) (Mesorhizobium loti (strain MAFF 303099)).